Consider the following 667-residue polypeptide: DNA ligase (667 aa).

Residues 34 to 38 (DAEYD), 83 to 84 (SL), and E113 each bind NAD(+). K115 functions as the N6-AMP-lysine intermediate in the catalytic mechanism. R136, E170, K286, and K310 together coordinate NAD(+). C404, C407, C422, and C427 together coordinate Zn(2+). The region spanning 589–667 (ATDSVLSGKT…EQQLEDVVGK (79 aa)) is the BRCT domain.

Belongs to the NAD-dependent DNA ligase family. LigA subfamily. Requires Mg(2+) as cofactor. Mn(2+) is required as a cofactor.

The enzyme catalyses NAD(+) + (deoxyribonucleotide)n-3'-hydroxyl + 5'-phospho-(deoxyribonucleotide)m = (deoxyribonucleotide)n+m + AMP + beta-nicotinamide D-nucleotide.. Its function is as follows. DNA ligase that catalyzes the formation of phosphodiester linkages between 5'-phosphoryl and 3'-hydroxyl groups in double-stranded DNA using NAD as a coenzyme and as the energy source for the reaction. It is essential for DNA replication and repair of damaged DNA. The polypeptide is DNA ligase (Oceanobacillus iheyensis (strain DSM 14371 / CIP 107618 / JCM 11309 / KCTC 3954 / HTE831)).